A 184-amino-acid polypeptide reads, in one-letter code: Glutathione-regulated potassium-efflux system ancillary protein KefG (184 aa).

It belongs to the NAD(P)H dehydrogenase (quinone) family. KefG subfamily. As to quaternary structure, interacts with KefB.

It localises to the cell inner membrane. The catalysed reaction is a quinone + NADH + H(+) = a quinol + NAD(+). It catalyses the reaction a quinone + NADPH + H(+) = a quinol + NADP(+). Regulatory subunit of a potassium efflux system that confers protection against electrophiles. Required for full activity of KefB. This chain is Glutathione-regulated potassium-efflux system ancillary protein KefG, found in Erwinia tasmaniensis (strain DSM 17950 / CFBP 7177 / CIP 109463 / NCPPB 4357 / Et1/99).